We begin with the raw amino-acid sequence, 207 residues long: ATP phosphoribosyltransferase (207 aa).

This sequence belongs to the ATP phosphoribosyltransferase family. Short subfamily. Heteromultimer composed of HisG and HisZ subunits.

It localises to the cytoplasm. It catalyses the reaction 1-(5-phospho-beta-D-ribosyl)-ATP + diphosphate = 5-phospho-alpha-D-ribose 1-diphosphate + ATP. It functions in the pathway amino-acid biosynthesis; L-histidine biosynthesis; L-histidine from 5-phospho-alpha-D-ribose 1-diphosphate: step 1/9. In terms of biological role, catalyzes the condensation of ATP and 5-phosphoribose 1-diphosphate to form N'-(5'-phosphoribosyl)-ATP (PR-ATP). Has a crucial role in the pathway because the rate of histidine biosynthesis seems to be controlled primarily by regulation of HisG enzymatic activity. This chain is ATP phosphoribosyltransferase (hisG), found in Dictyoglomus turgidum (strain DSM 6724 / Z-1310).